The following is a 632-amino-acid chain: Cytoplasmic polyadenylation element-binding protein 3 (632 aa).

Residues 1-11 are compositionally biased toward basic and acidic residues; that stretch reads MQDDLLMDKSK. Disordered stretches follow at residues 1–89 and 127–212; these read MQDD…TGGS and FSPQ…RRAV. Residues 13 to 48 show a composition bias toward low complexity; it reads QQRQQPQQPPSSQTQQQQKEAASVAEPPSSRESSPP. 2 stretches are compositionally biased toward polar residues: residues 65–89 and 135–169; these read SFQQEPPTTPSLSPSFGSTWSTGGS and HQTQQQQRRSPASPNNHTAYTQRNAYSHQPILTNK. Over residues 170–193 the composition is skewed to low complexity; the sequence is PSSSPNSSSPSPSNWNNQQNAAWN. RRM domains follow at residues 375–466 and 483–565; these read RKVF…PWNL and KTIF…PYVL.

It belongs to the RRM CPEB family. Following synaptic activity, forms amyloid-like oligomers. Aggregation requires an intact actin cytoskeleton. In terms of tissue distribution, in embryos, expressed in the central nervous system, and intermediate and distal pronephric tubule segments of the embryonic kidney.

It localises to the cytoplasm. The protein resides in the nucleus. It is found in the synapse. Its subcellular location is the cell projection. The protein localises to the dendrite. It localises to the postsynaptic density. Its function is as follows. Sequence-specific RNA-binding protein which acts as a translational repressor in the basal unstimulated state but, following neuronal stimulation, acts as a translational activator. Does not bind to the cytoplasmic polyadenylation element (CPE), a uridine-rich sequence element within the mRNA 3'-UTR, but binds to a U-rich loop within a stem-loop structure. Required for the consolidation and maintenance of hippocampal-based long term memory. Inhibits differentiation of intermediate mesoderm from an early stage to inhibit pronephric differentiation but induce neural differentiation. In Xenopus tropicalis (Western clawed frog), this protein is Cytoplasmic polyadenylation element-binding protein 3 (cpeb3).